The chain runs to 343 residues: Palmitoyltransferase ZDHHC4 (343 aa).

At 1–2 (MD) the chain is on the lumenal side. A helical transmembrane segment spans residues 3-23 (FLVLFLLYLALVLLGFVMICI). The Cytoplasmic segment spans residues 24–67 (GSKTHYLQGLISRGAQVFSYIIPECLQRAMLSVLHYLFHTRNYT). Residues 68-88 (FVVLHLILQGMVYTEYTWEIF) traverse the membrane as a helical segment. The Lumenal segment spans residues 89–95 (GLCQQLE). A helical transmembrane segment spans residues 96-116 (FSLYYLFLPYLLLIVNLLFFT). Over 117-196 (LSCVTNPGTI…GAWNTRYFLS (80 aa)) the chain is Cytoplasmic. Residues 149–199 (VRCPTCDLRKPARSKHCSVCNRCVHRFDHHCVWVNNCIGAWNTRYFLSYLF) enclose the DHHC domain. Residue Cys-179 is the S-palmitoyl cysteine intermediate of the active site. The helical transmembrane segment at 197 to 217 (YLFTLTASAATMAVVSTVFLV) threads the bilayer. The Lumenal portion of the chain corresponds to 218-255 (RLVVMSDVYLQTYVDDLGHLQVVDTVFLVQYLFLTFPR). The chain crosses the membrane as a helical span at residues 256–276 (IVFLVGFVVVLSFLLGGYLCF). Residues 277–343 (CLYLAATNQT…ATACYERKEK (67 aa)) lie on the Cytoplasmic side of the membrane. The Di-lysine motif signature appears at 340–343 (RKEK).

Belongs to the DHHC palmitoyltransferase family. Interacts with CPT1A.

The protein resides in the endoplasmic reticulum membrane. Its subcellular location is the golgi apparatus membrane. It localises to the cell membrane. It carries out the reaction L-cysteinyl-[protein] + hexadecanoyl-CoA = S-hexadecanoyl-L-cysteinyl-[protein] + CoA. Palmitoyltransferase that could catalyze the addition of palmitate onto protein substrates including the D(2) dopamine receptor DRD2, GSK3B or MAVS. Mediates GSK3B palmitoylation to prevent its AKT1-mediated phosphorylation leading to activation of the STAT3 signaling pathway. Also catalyzes MAVS palmitoylation which promotes its stabilization and activation by inhibiting 'Lys-48'- but facilitating 'Lys-63'-linked ubiquitination. The protein is Palmitoyltransferase ZDHHC4 of Bos taurus (Bovine).